Consider the following 335-residue polypeptide: Biotin synthase (335 aa).

The Radical SAM core domain occupies 47–276 (FYGKKVKLNM…SKEIRISGGR (230 aa)). Cys65, Cys69, and Cys72 together coordinate [4Fe-4S] cluster. Residues Cys109, Cys141, Cys201, and Arg271 each contribute to the [2Fe-2S] cluster site.

Belongs to the radical SAM superfamily. Biotin synthase family. Homodimer. [4Fe-4S] cluster serves as cofactor. It depends on [2Fe-2S] cluster as a cofactor.

It carries out the reaction (4R,5S)-dethiobiotin + (sulfur carrier)-SH + 2 reduced [2Fe-2S]-[ferredoxin] + 2 S-adenosyl-L-methionine = (sulfur carrier)-H + biotin + 2 5'-deoxyadenosine + 2 L-methionine + 2 oxidized [2Fe-2S]-[ferredoxin]. It participates in cofactor biosynthesis; biotin biosynthesis; biotin from 7,8-diaminononanoate: step 2/2. Its function is as follows. Catalyzes the conversion of dethiobiotin (DTB) to biotin by the insertion of a sulfur atom into dethiobiotin via a radical-based mechanism. This is Biotin synthase from Bacillus subtilis (strain 168).